A 226-amino-acid chain; its full sequence is 2-C-methyl-D-erythritol 4-phosphate cytidylyltransferase (226 aa).

The protein belongs to the IspD/TarI cytidylyltransferase family. IspD subfamily.

It carries out the reaction 2-C-methyl-D-erythritol 4-phosphate + CTP + H(+) = 4-CDP-2-C-methyl-D-erythritol + diphosphate. Its pathway is isoprenoid biosynthesis; isopentenyl diphosphate biosynthesis via DXP pathway; isopentenyl diphosphate from 1-deoxy-D-xylulose 5-phosphate: step 2/6. Functionally, catalyzes the formation of 4-diphosphocytidyl-2-C-methyl-D-erythritol from CTP and 2-C-methyl-D-erythritol 4-phosphate (MEP). The polypeptide is 2-C-methyl-D-erythritol 4-phosphate cytidylyltransferase (Bacillus cereus (strain ATCC 14579 / DSM 31 / CCUG 7414 / JCM 2152 / NBRC 15305 / NCIMB 9373 / NCTC 2599 / NRRL B-3711)).